The primary structure comprises 237 residues: UPF0502 protein RB6530 (237 aa).

Over residues 187–202 the composition is skewed to polar residues; the sequence is ASSAAPSQAESGSTSP. The disordered stretch occupies residues 187–211; the sequence is ASSAAPSQAESGSTSPAKAANDDRI.

It belongs to the UPF0502 family.

The sequence is that of UPF0502 protein RB6530 from Rhodopirellula baltica (strain DSM 10527 / NCIMB 13988 / SH1).